The chain runs to 109 residues: Spermidine export protein MdtI (109 aa).

The next 4 membrane-spanning stretches (helical) occupy residues 6 to 26 (WVHA…NVFL), 36 to 56 (IFGL…SQAV), 64 to 84 (AYAL…WILF), and 88 to 108 (LNRK…MVKL).

The protein belongs to the drug/metabolite transporter (DMT) superfamily. Small multidrug resistance (SMR) (TC 2.A.7.1) family. MdtI subfamily. As to quaternary structure, forms a complex with MdtJ.

Its subcellular location is the cell inner membrane. Its function is as follows. Catalyzes the excretion of spermidine. The polypeptide is Spermidine export protein MdtI (Escherichia coli O81 (strain ED1a)).